The primary structure comprises 344 residues: MITQRQNDILNLIVELFTQTHEPVGSKALQRTIDSSSATIRNDMAKLEKLGLLEKAHTSSGRMPSPAGFKYFVEHSLRLDSIDEQDIYYVIKAFDFEAFKLEDMLQKASHILSEMTGYTSVILDVEPARQRLTGFDVVQLSNHDALAVMTLDESKPVTVQFAIPRNFLTRDLIAFKAIVEERLLDGSVMDIHYKLRTEIPQIVQKYFVTTDNVLQLFDYVFSELFLETVFVAGKVNSLTYSDLSTYQFLDNEQQVAISLRQSLKEGEMASVQVADSQEAALADVSVLTHKFLIPYRGFGLLSLIGPIDMDYRRSVSLVNIIGKVLATKLGDYYRYLNSNHYEVH.

It belongs to the HrcA family.

Negative regulator of class I heat shock genes (grpE-dnaK-dnaJ and groELS operons). Prevents heat-shock induction of these operons. The chain is Heat-inducible transcription repressor HrcA from Streptococcus agalactiae serotype Ia (strain ATCC 27591 / A909 / CDC SS700).